Reading from the N-terminus, the 175-residue chain is Inorganic pyrophosphatase (175 aa).

3 residues coordinate substrate: Lys-30, Arg-44, and Tyr-56. Positions 66, 71, and 103 each coordinate Mg(2+). Tyr-142 contributes to the substrate binding site.

This sequence belongs to the PPase family. In terms of assembly, homohexamer. Mg(2+) serves as cofactor.

It is found in the cytoplasm. It carries out the reaction diphosphate + H2O = 2 phosphate + H(+). Catalyzes the hydrolysis of inorganic pyrophosphate (PPi) forming two phosphate ions. The sequence is that of Inorganic pyrophosphatase from Yersinia pestis.